Consider the following 149-residue polypeptide: Ribosome-binding factor A (149 aa).

Positions 123–149 (LAKLREGAAPAGDADPYKTSSKSESEE) are disordered.

It belongs to the RbfA family. As to quaternary structure, monomer. Binds 30S ribosomal subunits, but not 50S ribosomal subunits or 70S ribosomes.

Its subcellular location is the cytoplasm. In terms of biological role, one of several proteins that assist in the late maturation steps of the functional core of the 30S ribosomal subunit. Associates with free 30S ribosomal subunits (but not with 30S subunits that are part of 70S ribosomes or polysomes). Required for efficient processing of 16S rRNA. May interact with the 5'-terminal helix region of 16S rRNA. The protein is Ribosome-binding factor A of Corynebacterium glutamicum (strain ATCC 13032 / DSM 20300 / JCM 1318 / BCRC 11384 / CCUG 27702 / LMG 3730 / NBRC 12168 / NCIMB 10025 / NRRL B-2784 / 534).